An 81-amino-acid chain; its full sequence is Large ribosomal subunit protein bL31B (81 aa).

This sequence belongs to the bacterial ribosomal protein bL31 family. Type B subfamily. Part of the 50S ribosomal subunit.

The polypeptide is Large ribosomal subunit protein bL31B (Bacillus cereus (strain G9842)).